We begin with the raw amino-acid sequence, 71 residues long: UPF0346 protein Sez_1447 (71 aa).

It belongs to the UPF0346 family.

The sequence is that of UPF0346 protein Sez_1447 from Streptococcus equi subsp. zooepidemicus (strain MGCS10565).